A 391-amino-acid polypeptide reads, in one-letter code: Small ribosomal subunit protein bS1 (391 aa).

4 S1 motif domains span residues 16–90, 108–173, 194–262, and 279–348; these read GDKV…LSRR, NEII…LSRK, GDVI…LSIK, and NDDI…LSIK. Positions 356–381 are disordered; sequence VVESDPSTTKAYLESEEEDNPTIGDM.

Belongs to the bacterial ribosomal protein bS1 family.

In terms of biological role, binds mRNA; thus facilitating recognition of the initiation point. It is needed to translate mRNA with a short Shine-Dalgarno (SD) purine-rich sequence. The chain is Small ribosomal subunit protein bS1 (rpsA) from Staphylococcus aureus (strain MRSA252).